Reading from the N-terminus, the 240-residue chain is 2,3,4,5-tetrahydropyridine-2,6-dicarboxylate N-acetyltransferase (240 aa).

This sequence belongs to the transferase hexapeptide repeat family. DapH subfamily.

The enzyme catalyses (S)-2,3,4,5-tetrahydrodipicolinate + acetyl-CoA + H2O = L-2-acetamido-6-oxoheptanedioate + CoA. It functions in the pathway amino-acid biosynthesis; L-lysine biosynthesis via DAP pathway; LL-2,6-diaminopimelate from (S)-tetrahydrodipicolinate (acetylase route): step 1/3. Catalyzes the transfer of an acetyl group from acetyl-CoA to tetrahydrodipicolinate. This chain is 2,3,4,5-tetrahydropyridine-2,6-dicarboxylate N-acetyltransferase, found in Halalkalibacterium halodurans (strain ATCC BAA-125 / DSM 18197 / FERM 7344 / JCM 9153 / C-125) (Bacillus halodurans).